The sequence spans 101 residues: NAD(P)H-quinone oxidoreductase subunit 4L, chloroplastic (101 aa).

The next 3 membrane-spanning stretches (helical) occupy residues 2-22, 32-52, and 61-81; these read MFEHVLFLSAYLFSIGIYGLI, MCLELILNSVNINLVTFSDLF, and IFSIFVIAIAAAEAAIGLAIV.

It belongs to the complex I subunit 4L family. As to quaternary structure, NDH is composed of at least 16 different subunits, 5 of which are encoded in the nucleus.

Its subcellular location is the plastid. It localises to the chloroplast thylakoid membrane. The catalysed reaction is a plastoquinone + NADH + (n+1) H(+)(in) = a plastoquinol + NAD(+) + n H(+)(out). It carries out the reaction a plastoquinone + NADPH + (n+1) H(+)(in) = a plastoquinol + NADP(+) + n H(+)(out). In terms of biological role, NDH shuttles electrons from NAD(P)H:plastoquinone, via FMN and iron-sulfur (Fe-S) centers, to quinones in the photosynthetic chain and possibly in a chloroplast respiratory chain. The immediate electron acceptor for the enzyme in this species is believed to be plastoquinone. Couples the redox reaction to proton translocation, and thus conserves the redox energy in a proton gradient. This Lemna minor (Common duckweed) protein is NAD(P)H-quinone oxidoreductase subunit 4L, chloroplastic.